The chain runs to 341 residues: L-threonine 3-dehydrogenase (341 aa).

Position 38 (Cys38) interacts with Zn(2+). Active-site charge relay system residues include Thr40 and His43. Residues His63, Glu64, Cys93, Cys96, Cys99, and Cys107 each contribute to the Zn(2+) site. Residues Ile175, Asp195, Arg200, 262 to 264, and 286 to 287 each bind NAD(+); these read LGI and IY.

The protein belongs to the zinc-containing alcohol dehydrogenase family. As to quaternary structure, homotetramer. Zn(2+) is required as a cofactor.

Its subcellular location is the cytoplasm. The enzyme catalyses L-threonine + NAD(+) = (2S)-2-amino-3-oxobutanoate + NADH + H(+). The protein operates within amino-acid degradation; L-threonine degradation via oxydo-reductase pathway; glycine from L-threonine: step 1/2. Its function is as follows. Catalyzes the NAD(+)-dependent oxidation of L-threonine to 2-amino-3-ketobutyrate. The protein is L-threonine 3-dehydrogenase of Shewanella pealeana (strain ATCC 700345 / ANG-SQ1).